We begin with the raw amino-acid sequence, 485 residues long: PTS system arbutin-, cellobiose-, and salicin-specific EIIBC component (485 aa).

The 88-residue stretch at 1 to 88 (MAKNYAALAR…VSLLPGDMQP (88 aa)) folds into the PTS EIIB type-1 domain. Cysteine 28 (phosphocysteine intermediate; for EIIB activity) is an active-site residue. A run of 10 helical transmembrane segments spans residues 102 to 122 (IGAG…PAII), 147 to 167 (LTIL…MVAA), 177 to 197 (MSLA…ELMA), 207 to 227 (FALI…ALVM), 254 to 274 (LIVL…GIWI), 285 to 305 (IHGY…PLLV), 330 to 350 (VMPS…AVAW), 363 to 383 (AAAA…GVAI), 389 to 409 (LIAS…AGLA), and 433 to 453 (IVWV…LTLL). The PTS EIIC type-1 domain occupies 108–470 (DALIGTMSPL…VEEAAAQARK (363 aa)).

The protein resides in the cell inner membrane. The phosphoenolpyruvate-dependent sugar phosphotransferase system (sugar PTS), a major carbohydrate active -transport system, catalyzes the phosphorylation of incoming sugar substrates concomitantly with their translocation across the cell membrane. This system is involved in arbutin, cellobiose, and salicin transport. This Escherichia coli (strain K12) protein is PTS system arbutin-, cellobiose-, and salicin-specific EIIBC component (ascF).